Consider the following 619-residue polypeptide: Dihydroxy-acid dehydratase (619 aa).

Residue Asp-81 participates in Mg(2+) binding. Residue Cys-122 coordinates [2Fe-2S] cluster. 2 residues coordinate Mg(2+): Asp-123 and Lys-124. Residue Lys-124 is modified to N6-carboxylysine. Residue Cys-198 participates in [2Fe-2S] cluster binding. Glu-494 lines the Mg(2+) pocket. Ser-520 functions as the Proton acceptor in the catalytic mechanism.

Belongs to the IlvD/Edd family. Homodimer. It depends on [2Fe-2S] cluster as a cofactor. The cofactor is Mg(2+).

The enzyme catalyses (2R)-2,3-dihydroxy-3-methylbutanoate = 3-methyl-2-oxobutanoate + H2O. The catalysed reaction is (2R,3R)-2,3-dihydroxy-3-methylpentanoate = (S)-3-methyl-2-oxopentanoate + H2O. Its pathway is amino-acid biosynthesis; L-isoleucine biosynthesis; L-isoleucine from 2-oxobutanoate: step 3/4. It functions in the pathway amino-acid biosynthesis; L-valine biosynthesis; L-valine from pyruvate: step 3/4. Functionally, functions in the biosynthesis of branched-chain amino acids. Catalyzes the dehydration of (2R,3R)-2,3-dihydroxy-3-methylpentanoate (2,3-dihydroxy-3-methylvalerate) into 2-oxo-3-methylpentanoate (2-oxo-3-methylvalerate) and of (2R)-2,3-dihydroxy-3-methylbutanoate (2,3-dihydroxyisovalerate) into 2-oxo-3-methylbutanoate (2-oxoisovalerate), the penultimate precursor to L-isoleucine and L-valine, respectively. The protein is Dihydroxy-acid dehydratase of Neisseria meningitidis serogroup C / serotype 2a (strain ATCC 700532 / DSM 15464 / FAM18).